The chain runs to 160 residues: 2-C-methyl-D-erythritol 2,4-cyclodiphosphate synthase (160 aa).

A divalent metal cation contacts are provided by D12 and H14. 4-CDP-2-C-methyl-D-erythritol 2-phosphate-binding positions include D12–H14 and H38–S39. H46 is an a divalent metal cation binding site. 4-CDP-2-C-methyl-D-erythritol 2-phosphate contacts are provided by residues D60 to G62, F65 to D69, T136 to E139, F143, and R146.

It belongs to the IspF family. In terms of assembly, homotrimer. The cofactor is a divalent metal cation.

The catalysed reaction is 4-CDP-2-C-methyl-D-erythritol 2-phosphate = 2-C-methyl-D-erythritol 2,4-cyclic diphosphate + CMP. It functions in the pathway isoprenoid biosynthesis; isopentenyl diphosphate biosynthesis via DXP pathway; isopentenyl diphosphate from 1-deoxy-D-xylulose 5-phosphate: step 4/6. Involved in the biosynthesis of isopentenyl diphosphate (IPP) and dimethylallyl diphosphate (DMAPP), two major building blocks of isoprenoid compounds. Catalyzes the conversion of 4-diphosphocytidyl-2-C-methyl-D-erythritol 2-phosphate (CDP-ME2P) to 2-C-methyl-D-erythritol 2,4-cyclodiphosphate (ME-CPP) with a corresponding release of cytidine 5-monophosphate (CMP). The polypeptide is 2-C-methyl-D-erythritol 2,4-cyclodiphosphate synthase (Acinetobacter baumannii (strain SDF)).